Reading from the N-terminus, the 131-residue chain is Large ribosomal subunit protein bL17 (131 aa).

The protein belongs to the bacterial ribosomal protein bL17 family. Part of the 50S ribosomal subunit. Contacts protein L32.

The sequence is that of Large ribosomal subunit protein bL17 from Thermotoga neapolitana (strain ATCC 49049 / DSM 4359 / NBRC 107923 / NS-E).